The chain runs to 504 residues: Probable cytosol aminopeptidase (504 aa).

Mn(2+)-binding residues include Lys-274 and Asp-279. Lys-286 is an active-site residue. 3 residues coordinate Mn(2+): Asp-297, Asp-356, and Glu-358. Arg-360 is a catalytic residue.

The protein belongs to the peptidase M17 family. Requires Mn(2+) as cofactor.

Its subcellular location is the cytoplasm. The catalysed reaction is Release of an N-terminal amino acid, Xaa-|-Yaa-, in which Xaa is preferably Leu, but may be other amino acids including Pro although not Arg or Lys, and Yaa may be Pro. Amino acid amides and methyl esters are also readily hydrolyzed, but rates on arylamides are exceedingly low.. The enzyme catalyses Release of an N-terminal amino acid, preferentially leucine, but not glutamic or aspartic acids.. Presumably involved in the processing and regular turnover of intracellular proteins. Catalyzes the removal of unsubstituted N-terminal amino acids from various peptides. The polypeptide is Probable cytosol aminopeptidase (Gloeobacter violaceus (strain ATCC 29082 / PCC 7421)).